The following is a 352-amino-acid chain: Ion-translocating oxidoreductase complex subunit D (352 aa).

Transmembrane regions (helical) follow at residues 20 to 40, 42 to 62, 78 to 109, 123 to 143, and 148 to 168; these read IMLL…WFFG, GTLV…ALVL, ALLT…VIIA, PAMI…TSWL, and IAVN…GHTA. Thr187 carries the FMN phosphoryl threonine modification. A run of 5 helical transmembrane segments spans residues 214-234, 242-262, 267-287, 301-321, and 322-342; these read ILAG…GVWL, WHIP…GWLF, LAAP…FFIL, LIFG…GGYP, and DGVA…DYYT.

Belongs to the NqrB/RnfD family. The complex is composed of six subunits: RsxA, RsxB, RsxC, RsxD, RsxE and RsxG. The cofactor is FMN.

The protein resides in the cell inner membrane. Part of a membrane-bound complex that couples electron transfer with translocation of ions across the membrane. Required to maintain the reduced state of SoxR. This chain is Ion-translocating oxidoreductase complex subunit D, found in Shigella dysenteriae serotype 1 (strain Sd197).